Here is a 537-residue protein sequence, read N- to C-terminus: CTP synthase (537 aa).

The interval 1-267 is amidoligase domain; the sequence is MAKYIFVTGG…DEYVIKRLNL (267 aa). S13 provides a ligand contact to CTP. S13 provides a ligand contact to UTP. Position 14-19 (14-19) interacts with ATP; it reads SLGKGI. Y54 contacts L-glutamine. Residue D71 participates in ATP binding. The Mg(2+) site is built by D71 and E141. Residues 148 to 150, 188 to 193, and K224 each bind CTP; these read DIE and KTKPTQ. UTP-binding positions include 188–193 and K224; that span reads KTKPTQ. 240–242 serves as a coordination point for ATP; sequence RDV. The Glutamine amidotransferase type-1 domain maps to 292–534; sequence EVALVGKYVD…VKAMLNLKIN (243 aa). G354 provides a ligand contact to L-glutamine. The active-site Nucleophile; for glutamine hydrolysis is C381. L-glutamine contacts are provided by residues 382–385, E405, and R462; that span reads LGMQ. Active-site residues include H507 and E509.

The protein belongs to the CTP synthase family. In terms of assembly, homotetramer.

The enzyme catalyses UTP + L-glutamine + ATP + H2O = CTP + L-glutamate + ADP + phosphate + 2 H(+). The catalysed reaction is L-glutamine + H2O = L-glutamate + NH4(+). It carries out the reaction UTP + NH4(+) + ATP = CTP + ADP + phosphate + 2 H(+). It functions in the pathway pyrimidine metabolism; CTP biosynthesis via de novo pathway; CTP from UDP: step 2/2. With respect to regulation, allosterically activated by GTP, when glutamine is the substrate; GTP has no effect on the reaction when ammonia is the substrate. The allosteric effector GTP functions by stabilizing the protein conformation that binds the tetrahedral intermediate(s) formed during glutamine hydrolysis. Inhibited by the product CTP, via allosteric rather than competitive inhibition. Its function is as follows. Catalyzes the ATP-dependent amination of UTP to CTP with either L-glutamine or ammonia as the source of nitrogen. Regulates intracellular CTP levels through interactions with the four ribonucleotide triphosphates. The polypeptide is CTP synthase (Caldanaerobacter subterraneus subsp. tengcongensis (strain DSM 15242 / JCM 11007 / NBRC 100824 / MB4) (Thermoanaerobacter tengcongensis)).